The following is a 645-amino-acid chain: MDVINCEEVKRDEFHTEKYYDSYNIFGAHIVTEDGMRGVRCTVWAPHAKAMSVVGDFNEWDYEQHKMLQVTEEGIWSLFVPHIEENEIYKYAIETMDGDVILKADPYAVYAEVRPNTASVVFDIEGYEWNDKNWIRKRKKKSIYKEAMTVYELHFGSWKKKEDGALYSYREMAEELIPYVVEHQFTHIEIMPLVEHPYDRSWGYQGTGYYAATSRFGTPHDLMYFVDECHKYGIGVILDWVPGHFCKDAHGLYLFDGTPTYEYKDRDVQENLVWGTVNFDLGKREVRNFLISNALFWMKYFHIDGFRVDAVANMLYWNKEGKEQSNEHAVSFLRELNEAVFAEDEEFLMTAEDSTAWPLVTAPTYEGGLGFNYKWNMGWMNDVLKYMECAPEYRKYIHEKMTFSLIYAHSENFILPLSHDEVVHGKKSLLNKMPGDYWDKFAQLRLLYGYFFTHPGKKLLFMGGEFGQFDEWKDLEDLDWNLHDFEMHRNMHDYFKELIALYKRSKPLWQLDHSPEGFQWIDANNNEQSIFSFIRQGDKQEDALVVVCNFTKATYENYKVGVPDFEYYNEILNSDSAQYGGSGQVNKKRLKTILEPYHNQAAHVEITIPPFGVSILRPVKTRKGSKKQDGSKTKVRSNVTSRGKR.

The Nucleophile role is filled by D309. The active-site Proton donor is the E352. The segment at 619-645 (VKTRKGSKKQDGSKTKVRSNVTSRGKR) is disordered. A compositionally biased stretch (polar residues) spans 636-645 (RSNVTSRGKR).

It belongs to the glycosyl hydrolase 13 family. GlgB subfamily. In terms of assembly, monomer.

The catalysed reaction is Transfers a segment of a (1-&gt;4)-alpha-D-glucan chain to a primary hydroxy group in a similar glucan chain.. Its pathway is glycan biosynthesis; glycogen biosynthesis. Its function is as follows. Catalyzes the formation of the alpha-1,6-glucosidic linkages in glycogen by scission of a 1,4-alpha-linked oligosaccharide from growing alpha-1,4-glucan chains and the subsequent attachment of the oligosaccharide to the alpha-1,6 position. This chain is 1,4-alpha-glucan branching enzyme GlgB, found in Bacillus mycoides (strain KBAB4) (Bacillus weihenstephanensis).